The chain runs to 412 residues: Diphosphomevalonate decarboxylase MVD1, peroxisomal (412 aa).

23–26 (YWGK) provides a ligand contact to (R)-5-diphosphomevalonate. The Peroxisomal targeting signal PTS2 signature appears at 40–48 (SVTLDPDHL). Residues Arg-78, 161–166 (SGSACR), and Thr-217 contribute to the (R)-5-diphosphomevalonate site.

Belongs to the diphosphomevalonate decarboxylase family. As to quaternary structure, homodimer.

Its subcellular location is the peroxisome. It carries out the reaction (R)-5-diphosphomevalonate + ATP = isopentenyl diphosphate + ADP + phosphate + CO2. It participates in isoprenoid biosynthesis; isopentenyl diphosphate biosynthesis via mevalonate pathway; isopentenyl diphosphate from (R)-mevalonate: step 3/3. Its function is as follows. Performs the first committed step in the biosynthesis of isoprene-containing compounds such as sterols and terpenoids. Is specific for (R)-5-diphosphomevalonate (MVAPP). The catalytic efficiency with (R)-5-phosphomevalonate (MVAP) as substrate is 10000-fold lower than for MVAPP. Can complement a yeast mutant defective in MVD activity. In Arabidopsis thaliana (Mouse-ear cress), this protein is Diphosphomevalonate decarboxylase MVD1, peroxisomal.